The following is a 104-amino-acid chain: Naphthalene 1,2-dioxygenase/salicylate 5-hydroxylase systems, ferredoxin component (104 aa).

Residues 6 to 101 form the Rieske domain; that stretch reads IDAACLDDIP…VKIENMRVML (96 aa). 4 residues coordinate [2Fe-2S] cluster: Cys45, His47, Cys64, and His67.

It belongs to the bacterial ring-hydroxylating dioxygenase ferredoxin component family. As to quaternary structure, ferredoxin NagAb belongs to both the salicylate 5-hydroxylase (S5H) and the naphthalene 1,2-dioxygenase (NDO) multicomponent enzyme systems. The NDO multicomponent enzyme system is composed of an electron transfer component and a dioxygenase component (iron sulfur protein (ISP)). The electron transfer component is composed of a ferredoxin reductase (NagAa) and a ferredoxin (NagAb), and the dioxygenase component is formed by a large alpha subunit (NagAc) and a small beta subunit (NagAd). The S5H multicomponent enzyme system is composed of an electron transfer component and a monooxygenase component. The electron transfer component is composed of a ferredoxin reductase (NagAa) and a ferredoxin (NagAb), and the monooxygenase component is formed by a large subunit (NagG) and a small subunit (NagH). Requires [2Fe-2S] cluster as cofactor.

It functions in the pathway aromatic compound metabolism; naphthalene degradation. In terms of biological role, component of two multicomponent enzyme systems which are involved in the catabolism of naphthalene. Plays a role as an electron transfer component for both salicylate 5-hydroxylase (S5H) and naphthalene 1,2-dioxygenase (NDO) systems, by transferring electrons to the oxygenase components. The polypeptide is Naphthalene 1,2-dioxygenase/salicylate 5-hydroxylase systems, ferredoxin component (Ralstonia sp).